Reading from the N-terminus, the 650-residue chain is Amyloid beta precursor like protein 1 (650 aa).

A signal peptide spans 1–38 (MGPASPAARGLSRRPGQPPLPLLLPLLLLLLRAQPAIG). Residues 39 to 580 (SLAGGSPGAA…APAGTGVSRE (542 aa)) are Extracellular-facing. The GFLD subdomain stretch occupies residues 50-146 (APGSAQVAGL…PFRCLPGEFV (97 aa)). The E1 domain occupies 50-212 (APGSAQVAGL…RGVEYVCCPP (163 aa)). Cystine bridges form between cysteine 60/cysteine 84, cysteine 95/cysteine 140, cysteine 120/cysteine 128, cysteine 156/cysteine 210, cysteine 167/cysteine 197, and cysteine 181/cysteine 209. Residues 154 to 212 (EGCRFLHQERMDQCESSTRRHQEAQEACSSQGLILHGSGMLLPCGSDRFRGVEYVCCPP) form a cuBD subdomain region. A Cu(2+)-binding site is contributed by histidine 174. 3 residues coordinate Zn(2+): glutamate 206, cysteine 209, and cysteine 210. Positions 214–287 (GTPDPSGTAV…LAVVGKVTPT (74 aa)) are disordered. Threonine 215 is a glycosylation site (O-linked (GalNAc...) threonine). Serine 227 is a glycosylation site (O-linked (GalNAc...) serine). The O-linked (GalNAc...) threonine glycan is linked to threonine 228. The interval 285 to 305 (TPTPRPTDGVDIYFGMPGEIS) is O-glycosylated at three sites. Residues 293-484 (GVDIYFGMPG…QELRPQIQEL (192 aa)) enclose the E2 domain. Heparin-binding stretches follow at residues 310-342 (FLRA…SKNL) and 410-441 (LLAL…DPEK). A glycan (N-linked (GlcNAc...) asparagine) is linked at asparagine 337. Positions 442–459 (AQQMRFQVHTHLQVIEER) are collagen-binding. Residue asparagine 461 is glycosylated (N-linked (GlcNAc...) asparagine). The tract at residues 492-546 (PSELEAPAPGGSSEDKGGLQPPDSKDDTPMTLPKGSTEQDAASPEKEKMNPLEQY) is disordered. Basic and acidic residues-rich tracts occupy residues 504-519 (SEDK…KDDT) and 534-546 (SPEK…LEQY). Asparagine 551 is a glycosylation site (N-linked (GlcNAc...) asparagine). Cu(2+) is bound at residue histidine 561. Histidine 561 contributes to the Zn(2+) binding site. The chain crosses the membrane as a helical span at residues 581–603 (AVSGLLIMGAGGGSLIVLSMLLL). The Basolateral sorting signal signature appears at 604–615 (RRKKPYGAISHG). Topologically, residues 604–650 (RRKKPYGAISHGVVEVDPMLTLEEQQLRELQRHGYENPTYRFLEERP) are cytoplasmic. The segment at 632 to 649 (ELQRHGYENPTYRFLEER) is interaction with DAB1. Residues 636-650 (HGYENPTYRFLEERP) are interaction with DAB2. A Clathrin-binding motif is present at residues 640 to 643 (NPTY). An NPXY motif; contains endocytosis signal motif is present at residues 640 to 643 (NPTY).

This sequence belongs to the APP family. Monomer and homodimer. Heparin binding promotes homodimerization. Binds, via its C-terminus, to the PID domain of several cytoplasmic proteins, including APBB and APBA family members, MAPK8IP1 and DAB1. Binding to Dab1 inhibits its serine phosphorylation. Interacts with CPEB1. Interacts (via NPXY motif) with DAB2 (via PID domain); the interaction is impaired by tyrosine phosphorylation of the NPXY motif. Interacts (via NPXY motif) with DAB1. Proteolytically cleaved by caspases during neuronal apoptosis. Cleaved, in vitro, at Asp-620 by caspase-3. In terms of processing, N- and O-glycosylated. O-glycosylation with core 1 or possibly core 8 glycans. Glycosylation on Ser-227 is the preferred site to Thr-228. As to expression, expressed in the cerebral cortex where it is localized to the postsynaptic density (PSD).

The protein resides in the cell membrane. The protein localises to the cytoplasm. Its function is as follows. May play a role in postsynaptic function. The C-terminal gamma-secretase processed fragment, ALID1, activates transcription activation through APBB1 (Fe65) binding. Couples to JIP signal transduction through C-terminal binding. May interact with cellular G-protein signaling pathways. Can regulate neurite outgrowth through binding to components of the extracellular matrix such as heparin and collagen I. The gamma-CTF peptide, C30, is a potent enhancer of neuronal apoptosis. This is Amyloid beta precursor like protein 1 (APLP1) from Homo sapiens (Human).